The primary structure comprises 118 residues: Non-specific lipid-transfer protein 1 (118 aa).

The N-terminal stretch at Met-1–Ala-25 is a signal peptide. Intrachain disulfides connect Cys-29–Cys-76, Cys-39–Cys-53, Cys-54–Cys-100, and Cys-74–Cys-114.

Belongs to the plant LTP family. As to expression, expressed primarily in epidermal cells.

It is found in the secreted. It localises to the cell wall. In terms of biological role, plant non-specific lipid-transfer proteins transfer phospholipids as well as galactolipids across membranes. May play a role in wax or cutin deposition in the cell walls of expanding epidermal cells and certain secretory tissues. This chain is Non-specific lipid-transfer protein 1 (LTP1), found in Arabidopsis thaliana (Mouse-ear cress).